The sequence spans 153 residues: UPF0756 membrane protein LSEI_1366 (153 aa).

4 helical membrane-spanning segments follow: residues 4 to 24, 52 to 72, 85 to 105, and 115 to 135; these read WLFL…SLII, WGVT…EIGF, WIAI…VGLL, and LVFG…GPVI.

This sequence belongs to the UPF0756 family.

It is found in the cell membrane. This Lacticaseibacillus paracasei (strain ATCC 334 / BCRC 17002 / CCUG 31169 / CIP 107868 / KCTC 3260 / NRRL B-441) (Lactobacillus paracasei) protein is UPF0756 membrane protein LSEI_1366.